A 471-amino-acid chain; its full sequence is Fructokinase-like 1, chloroplastic (471 aa).

A chloroplast-targeting transit peptide spans 1–38 (MASLLIFPHLHHFDSSLDRREVLVVRHSQASRRFLTPK). Residues 36 to 85 (TPKASINGSGITNGAAAETTSKPSRKGRKKKQTSTVIEKDNTETDPELNP) form a disordered region. A compositionally biased stretch (polar residues) spans 39 to 57 (ASINGSGITNGAAAETTSK). Residues 58-67 (PSRKGRKKKQ) show a composition bias toward basic residues.

Belongs to the carbohydrate kinase PfkB family. In terms of assembly, interacts with CITRX/TRXz. Interacts with PTAC7. Self-interacts. Binds to FLN2. Associates with the plastid-encoded RNA polymerase (PEP) complex.

It is found in the plastid. It localises to the chloroplast. Functionally, required for proper chloroplast development, most likely through regulating plastid-encoded polymerase (PEP) dependent chloroplast transcription. Acts as a component of the transcriptionally active plastid chromosome that is required for plastid gene expression. The sequence is that of Fructokinase-like 1, chloroplastic from Arabidopsis thaliana (Mouse-ear cress).